The chain runs to 127 residues: Fluoride-specific ion channel FluC (127 aa).

The next 4 membrane-spanning stretches (helical) occupy residues 4–24, 35–55, 71–91, and 101–121; these read LLCAVFIGGGTGSVLRWWLGM, IGTLTANLVGAFVIGAGLAWF, TGFCGGLTTFSTFSAEVVFLL, and LNVMVNLLGSFAMTAVAFWLF. Residues glycine 75 and threonine 78 each contribute to the Na(+) site.

This sequence belongs to the fluoride channel Fluc/FEX (TC 1.A.43) family.

It localises to the cell inner membrane. The catalysed reaction is fluoride(in) = fluoride(out). With respect to regulation, na(+) is not transported, but it plays an essential structural role and its presence is essential for fluoride channel function. Functionally, fluoride-specific ion channel. Important for reducing fluoride concentration in the cell, thus reducing its toxicity. This is Fluoride-specific ion channel FluC from Klebsiella pneumoniae (strain 342).